A 251-amino-acid chain; its full sequence is tRNA pseudouridine synthase A (251 aa).

The active-site Nucleophile is D53. Residue Y110 coordinates substrate.

This sequence belongs to the tRNA pseudouridine synthase TruA family. As to quaternary structure, homodimer.

It catalyses the reaction uridine(38/39/40) in tRNA = pseudouridine(38/39/40) in tRNA. Formation of pseudouridine at positions 38, 39 and 40 in the anticodon stem and loop of transfer RNAs. This is tRNA pseudouridine synthase A from Mesoplasma florum (strain ATCC 33453 / NBRC 100688 / NCTC 11704 / L1) (Acholeplasma florum).